The primary structure comprises 865 residues: Protein fluG (865 aa).

The region spanning 442 to 533 (PGVKYVWTQF…VMTWWKSEQG (92 aa)) is the GS beta-grasp domain. Residues 540–865 (PRTNLLNINN…ARRKWLVERY (326 aa)) form the GS catalytic domain.

This sequence belongs to the glutamine synthetase family.

It localises to the cytoplasm. In terms of biological role, may function as a GSI-related enzyme in synthesizing a small diffusible factor that acts as an extracellular signal directing asexual sporulation and perhaps other aspects of colony growth. May be involved in brlA activation (an early transcriptional regulator for conidiation specific gene). This Emericella nidulans (strain FGSC A4 / ATCC 38163 / CBS 112.46 / NRRL 194 / M139) (Aspergillus nidulans) protein is Protein fluG (fluG).